The chain runs to 202 residues: Inner membrane-spanning protein YciB (202 aa).

6 helical membrane-spanning segments follow: residues F3 to A23, I46 to L66, M74 to N94, W100 to F120, L145 to Y165, and F173 to L193.

Belongs to the YciB family.

It is found in the cell inner membrane. Its function is as follows. Plays a role in cell envelope biogenesis, maintenance of cell envelope integrity and membrane homeostasis. The protein is Inner membrane-spanning protein YciB of Azoarcus sp. (strain BH72).